The following is a 302-amino-acid chain: Bifunctional protein FolD (302 aa).

NADP(+) is bound by residues 165 to 167, S190, and I231; that span reads GRS.

It belongs to the tetrahydrofolate dehydrogenase/cyclohydrolase family. As to quaternary structure, homodimer.

It carries out the reaction (6R)-5,10-methylene-5,6,7,8-tetrahydrofolate + NADP(+) = (6R)-5,10-methenyltetrahydrofolate + NADPH. It catalyses the reaction (6R)-5,10-methenyltetrahydrofolate + H2O = (6R)-10-formyltetrahydrofolate + H(+). It participates in one-carbon metabolism; tetrahydrofolate interconversion. Catalyzes the oxidation of 5,10-methylenetetrahydrofolate to 5,10-methenyltetrahydrofolate and then the hydrolysis of 5,10-methenyltetrahydrofolate to 10-formyltetrahydrofolate. This is Bifunctional protein FolD from Prochlorococcus marinus (strain MIT 9313).